The sequence spans 548 residues: Fluconazole resistance protein 1 (548 aa).

Residues 30–94 form a disordered region; it reads SAREDETRKP…WNGPSDPENP (65 aa). Basic and acidic residues predominate over residues 31-51; the sequence is AREDETRKPENTDKKECKPDY. The segment covering 60–73 has biased composition (low complexity); it reads SCSESSTDSDSSGS. Transmembrane regions (helical) follow at residues 104–124, 139–159, 179–199, 203–223, 230–250, 261–281, 347–367, 376–396, 416–436, 440–460, 476–496, and 511–531; these read LVVF…SIYT, VVAT…PIIF, FFFM…GLIV, ISGI…ADII, LVLG…PLLG, FIFW…AFFF, IAVA…VFVG, VGLA…LFGI, FLIV…LFGW, VHWI…FNIF, ASVF…FPLF, and VAWG…IPFI.

This sequence belongs to the major facilitator superfamily.

The protein localises to the membrane. Functionally, probable efflux transporter. Confers resistance to the azole derivative fluconazole (FCZ). This Saccharomyces cerevisiae (strain ATCC 204508 / S288c) (Baker's yeast) protein is Fluconazole resistance protein 1 (FLR1).